A 681-amino-acid chain; its full sequence is Dipeptidyl carboxypeptidase (681 aa).

His-470 contributes to the Zn(2+) binding site. The active site involves Glu-471. The Zn(2+) site is built by His-474 and His-477.

The protein belongs to the peptidase M3 family. The cofactor is Zn(2+).

Its subcellular location is the cytoplasm. It catalyses the reaction Hydrolysis of unblocked, C-terminal dipeptides from oligopeptides, with broad specificity. Does not hydrolyze bonds in which P1' is Pro, or both P1 and P1' are Gly.. Its activity is regulated as follows. Stimulated by Mn(2+), Mg(2+), Co(2+) and Ca(2+), inhibited by Cu(2+), Ni(2+), Zn(2+), chymostatin and 1,10-phenanthroline. Functionally, removes dipeptides from the C-termini of N-blocked tripeptides, tetrapeptides and larger peptides. In Escherichia coli (strain K12), this protein is Dipeptidyl carboxypeptidase.